The following is a 321-amino-acid chain: Thioredoxin reductase (321 aa).

FAD contacts are provided by residues 11 to 14, 40 to 41, Q45, N54, C145, D288, and 295 to 297; these read SGPA, TA, and RQA. A disulfide bond links C142 and C145.

It belongs to the class-II pyridine nucleotide-disulfide oxidoreductase family. Homodimer. FAD serves as cofactor.

It is found in the cytoplasm. It carries out the reaction [thioredoxin]-dithiol + NADP(+) = [thioredoxin]-disulfide + NADPH + H(+). This chain is Thioredoxin reductase (TRR1), found in Debaryomyces hansenii (strain ATCC 36239 / CBS 767 / BCRC 21394 / JCM 1990 / NBRC 0083 / IGC 2968) (Yeast).